Consider the following 126-residue polypeptide: Protein ApaG (126 aa).

The ApaG domain maps to 2–126; sequence ADKLYQMEVQ…MTLVAPRVLH (125 aa).

This Chromobacterium violaceum (strain ATCC 12472 / DSM 30191 / JCM 1249 / CCUG 213 / NBRC 12614 / NCIMB 9131 / NCTC 9757 / MK) protein is Protein ApaG.